A 313-amino-acid polypeptide reads, in one-letter code: Olfactory receptor 56A4 (313 aa).

Residues 1-28 (MASPSNDSTAPVSEFLLICFPNFQSWQH) are Extracellular-facing. Asn-6 carries an N-linked (GlcNAc...) asparagine glycan. The helical transmembrane segment at 29–49 (WLSLPLSLLFLLAMGANTTLL) threads the bilayer. Residues 50-57 (ITIQLEAS) lie on the Cytoplasmic side of the membrane. A helical transmembrane segment spans residues 58–78 (LHQPLYYLLSLLSLLDIVLCL). Residues 79 to 102 (TVIPKVLAIFWFDLRSISFPACFL) lie on the Extracellular side of the membrane. A disulfide bridge connects residues Cys-100 and Cys-192. A helical membrane pass occupies residues 103-123 (QMFIMNSFLTMESCTFMVMAY). The Cytoplasmic segment spans residues 124 to 142 (DRYVAICHPLRYPSIITDQ). Residues 143–163 (FVARAVVFVIARNAFVSLPVP) traverse the membrane as a helical segment. At 164–199 (MLSARLRYCAGNIIKNCICSNLSVSKLSCDDITFNQ) the chain is on the extracellular side. The N-linked (GlcNAc...) asparagine glycan is linked to Asn-184. The chain crosses the membrane as a helical span at residues 200–220 (LYQFVAGWTLLGSDLILIVIS). Residues 221 to 240 (YSFILKVVLRIKAEGAVAKA) lie on the Cytoplasmic side of the membrane. The helical transmembrane segment at 241–261 (LSTCGSHFILILFFSTVLLVL) threads the bilayer. Residues 262–276 (VITNLARKRIPPDVP) are Extracellular-facing. A helical transmembrane segment spans residues 277-297 (ILLNILHHLIPPALNPIVYGV). Over 298 to 313 (RTKEIKQGIQNLLKRL) the chain is Cytoplasmic.

Belongs to the G-protein coupled receptor 1 family.

The protein localises to the cell membrane. Its function is as follows. Odorant receptor. The protein is Olfactory receptor 56A4 (OR56A4) of Homo sapiens (Human).